The sequence spans 268 residues: Mitochondrial distribution and morphology protein 12 (268 aa).

One can recognise an SMP-LTD domain in the interval 1–256 (MSFEINWQDL…WPSWINLDFN (256 aa)). Residues 75 to 94 (LPKDKIPEESDSGCQSADGE) are disordered.

The protein belongs to the MDM12 family. As to quaternary structure, component of the ER-mitochondria encounter structure (ERMES) or MDM complex, composed of MMM1, MDM10, MDM12 and MDM34. An MMM1 homodimer associates with one molecule of MDM12 on each side in a pairwise head-to-tail manner, and the SMP-LTD domains of MMM1 and MDM12 generate a continuous hydrophobic tunnel for phospholipid trafficking.

It is found in the mitochondrion outer membrane. It localises to the endoplasmic reticulum membrane. Its function is as follows. Component of the ERMES/MDM complex, which serves as a molecular tether to connect the endoplasmic reticulum (ER) and mitochondria. Components of this complex are involved in the control of mitochondrial shape and protein biogenesis, and function in nonvesicular lipid trafficking between the ER and mitochondria. MDM12 is required for the interaction of the ER-resident membrane protein MMM1 and the outer mitochondrial membrane-resident beta-barrel protein MDM10. The MDM12-MMM1 subcomplex functions in the major beta-barrel assembly pathway that is responsible for biogenesis of all mitochondrial outer membrane beta-barrel proteins, and acts in a late step after the SAM complex. The MDM10-MDM12-MMM1 subcomplex further acts in the TOM40-specific pathway after the action of the MDM12-MMM1 complex. Essential for establishing and maintaining the structure of mitochondria and maintenance of mtDNA nucleoids. The sequence is that of Mitochondrial distribution and morphology protein 12 from Lachancea thermotolerans (strain ATCC 56472 / CBS 6340 / NRRL Y-8284) (Yeast).